Consider the following 316-residue polypeptide: MLRLLFTLVLLALYGPSVDASRDYVHVRLLSYRGDPLVFKHTFSGVRRPFTELGWAACRDWDSMHCTPFWSTDLEQMTDSVRRYSTVSPGKEVTLQLHGNQTVQPSFLSFTCRLQLEPVVENVGLYVAYVVNDGERPQQFFTPQVDVVRFALYLETLSRIVEPLESGRLTVEFDTPDLALAPDLVSSLFVAGHGETDFYMNWTLRRSQTHYLEEMALQVEILKPRGVRHRAIIHHPKLQPGVGLWIDFCVYRYNARLTRGYVRYTLSPKARLPAKAEGWLVSLDRFIVQYLNTLLITMMAAIWARVLITYLVSRRR.

Residues 1-20 (MLRLLFTLVLLALYGPSVDA) form the signal peptide. Residues 286-308 (FIVQYLNTLLITMMAAIWARVLI) traverse the membrane as a helical segment.

Interacts with host SEL1L.

The protein localises to the host endoplasmic reticulum membrane. Chaperone protein that plays an important role in HCMV tropism. Cooperates with UL116 to regulate the abundance of gH-gL complexes in virion. Favors the incorporation of gL into virions once UL116 has regulated the early folding steps of virion assembly. Interacts with the host ERAD machinery and slows gO decay which would otherwise be constitutively degraded. Reorganizes the host endoplasmic reticulum and activates the unfolded protein response. Additionally, plays a role in the evasion of antiviral immune response by down-regulating cell surface expression of host CD58. Mechanistically, interacts with host CD58 and retains its immature form intracellularly. The capacity to cause endoplasmic reticulum reorganization and the intracellular retention of host CD58 are functionally independent properties. The polypeptide is Membrane protein UL148 (UL148) (Human cytomegalovirus (strain Merlin) (HHV-5)).